The following is a 101-amino-acid chain: MKLAIVLLLLGLAVLCLGGKDSQHSASAGDSRSSEAFISRQDSANFARRHKRSYRYNVARGAAVTSPLESQREVCELNPDCDELADHIGFQEAYRRFYGPV.

The first 18 residues, 1–18, serve as a signal peptide directing secretion; that stretch reads MKLAIVLLLLGLAVLCLG. Positions 19-52 are excised as a propeptide; that stretch reads GKDSQHSASAGDSRSSEAFISRQDSANFARRHKR. The 47-residue stretch at 53-99 folds into the Gla domain; it reads SYRYNVARGAAVTSPLESQREVCELNPDCDELADHIGFQEAYRRFYG. Positions 69, 73, 76, and 82 each coordinate Ca(2+). 4-carboxyglutamate is present on residues glutamate 69, glutamate 73, and glutamate 76. Cysteine 75 and cysteine 81 are joined by a disulfide.

This sequence belongs to the osteocalcin/matrix Gla protein family. Gamma-carboxyglutamate residues are formed by vitamin K dependent carboxylation by GGCX. These residues are essential for the binding of calcium.

It localises to the secreted. In terms of biological role, the carboxylated form is one of the main organic components of the bone matrix, which constitutes 1-2% of the total bone protein. The carboxylated form binds strongly to apatite and calcium. This chain is Osteocalcin (bglap), found in Xenopus tropicalis (Western clawed frog).